Reading from the N-terminus, the 485-residue chain is Cobyric acid synthase (485 aa).

Residues 250 to 448 (TQTVAVIAYP…LHGMFEDPRV (199 aa)) form the GATase cobBQ-type domain. The Nucleophile role is filled by Cys334. The active site involves His440.

This sequence belongs to the CobB/CobQ family. CobQ subfamily.

The protein operates within cofactor biosynthesis; adenosylcobalamin biosynthesis. In terms of biological role, catalyzes amidations at positions B, D, E, and G on adenosylcobyrinic A,C-diamide. NH(2) groups are provided by glutamine, and one molecule of ATP is hydrogenolyzed for each amidation. The protein is Cobyric acid synthase of Polaromonas naphthalenivorans (strain CJ2).